The primary structure comprises 892 residues: E3 ubiquitin ligase PQT3-like (892 aa).

Residues 3 to 76 form the DWNN domain; sequence IYYKFKSARD…NTSVLIRRVP (74 aa). Residues 210–224 form a CCHC-type zinc finger; it reads CHRCNIPGHFIQHCP. Ser-285 is modified (phosphoserine). The RING-type; degenerate zinc finger occupies 295–333; it reads CPLCKEVMKDAALTSKCCYKSFCDKCIRDHIISKSMCVC. Disordered stretches follow at residues 375 to 408, 459 to 493, and 623 to 892; these read DLES…NNND, TQAP…MQWN, and MLRK…RSRA. Position 404 is a phosphoserine (Ser-404). The span at 623–644 shows a compositional bias: basic and acidic residues; it reads MLRKRENERRPEGGKMFRDGEN. Residues 647-666 are compositionally biased toward polar residues; that stretch reads MMMNNGTSASASSINPNKSR. Over residues 674 to 692 the composition is skewed to basic and acidic residues; it reads HDYDRRRRPEKRLSPEHPP. The Nuclear localization signal motif lies at 693–700; sequence TRKNISPS. The segment covering 708–745 has biased composition (basic and acidic residues); it reads ERYPDERDRQRDRERSRHQDVDREHDRTRDRRDEDRSR. The span at 810–832 shows a compositional bias: low complexity; that stretch reads SSSSTSVTDPSASASAAAAVGTS. The residue at position 866 (Ser-866) is a Phosphoserine. The segment covering 875-892 has biased composition (basic and acidic residues); the sequence is SEDKLRYSKRGKGERSRA.

Its subcellular location is the nucleus. It carries out the reaction S-ubiquitinyl-[E2 ubiquitin-conjugating enzyme]-L-cysteine + [acceptor protein]-L-lysine = [E2 ubiquitin-conjugating enzyme]-L-cysteine + N(6)-ubiquitinyl-[acceptor protein]-L-lysine.. This Arabidopsis thaliana (Mouse-ear cress) protein is E3 ubiquitin ligase PQT3-like.